The sequence spans 109 residues: RNA-binding protein Hfq (109 aa).

Positions 9-68 (DPFLNALRKEKVNVSVYLVNGIKLQGQVEAFDQFCIVLRNTVNQMVYKHAISTIVPAKSV) constitute a Sm domain. The segment at 77–109 (PYHQNSNDEQDENVDDIHSDDLEIQENEGNIHE) is disordered.

This sequence belongs to the Hfq family. Homohexamer.

Its function is as follows. RNA chaperone that binds small regulatory RNA (sRNAs) and mRNAs to facilitate mRNA translational regulation in response to envelope stress, environmental stress and changes in metabolite concentrations. Also binds with high specificity to tRNAs. The polypeptide is RNA-binding protein Hfq (Francisella tularensis subsp. mediasiatica (strain FSC147)).